The chain runs to 368 residues: Left-right determination factor 1 (368 aa).

A signal peptide spans M1 to A21. Positions L22–K76 are cleaved as a propeptide — or 135. An N-linked (GlcNAc...) asparagine glycan is attached at N158. 4 disulfides stabilise this stretch: C253/C266, C265/C318, C295/C353, and C299/C355.

Belongs to the TGF-beta family. The processing of the protein may also occur at the second R-X-X-R site located at AA 132-135. Processing appears to be regulated in a cell-type specific manner.

Its subcellular location is the secreted. Its function is as follows. Required for left-right axis determination as a regulator of LEFTY2 and NODAL. The polypeptide is Left-right determination factor 1 (Lefty1) (Mus musculus (Mouse)).